We begin with the raw amino-acid sequence, 94 residues long: Integration host factor subunit beta (94 aa).

The protein belongs to the bacterial histone-like protein family. As to quaternary structure, heterodimer of an alpha and a beta chain.

In terms of biological role, this protein is one of the two subunits of integration host factor, a specific DNA-binding protein that functions in genetic recombination as well as in transcriptional and translational control. The polypeptide is Integration host factor subunit beta (Pseudomonas paraeruginosa (strain DSM 24068 / PA7) (Pseudomonas aeruginosa (strain PA7))).